The primary structure comprises 552 residues: MISKPVDLPVDVVGAYLALRGEHEALQAKHAIAVAEAANAQAMLSDNEALIVALELKIEKLRRELRGQRSERTARLLDQLELQLEELVAAATEDEVAAQAASARTSSVRSFTRKRPVRKPWPDDIERERVVIEPPTTCTCCGGSRLSKLGEDVTETLEEIPRRFKVIETVREKFTCRDCEAISQTPAPFHATPRGFIGPNLLATILFDKFGMHSPLNRQSARFKCEGIDLSTSTLADQVGYATAALMPVFDLIEAHVFAAERLHGDDTTIPIQARDKCTTGRIWTYVCDDRPFGGTAPPAAIYYASSDRRGEHPQKHLAGYGGILQSDCYNGFEPIAVAATKAVPITFAFCHAHARRKFFELADIQKNARDRKRRGKPISPIALEAVKRYDELFEIERQINGLSAEERLAVRQEKSKPLFDDMHEWLTKERAMLSRSSEVIEPIDYMLKRWEGFALFLKDGRVCLTNNAAERALRSVALGRRNWTFAGSQRGADRAAVMLTVITTCRLNDIDPKAWLADVLARIADHPVTRLYELLPWEWKRASAATVMLAA.

Belongs to the transposase 25 family.

This is an uncharacterized protein from Sinorhizobium fredii (strain NBRC 101917 / NGR234).